The chain runs to 492 residues: Probable cytosol aminopeptidase (492 aa).

The Mn(2+) site is built by lysine 248 and aspartate 253. Lysine 260 is a catalytic residue. Mn(2+)-binding residues include aspartate 271, aspartate 330, and glutamate 332. Arginine 334 is a catalytic residue.

This sequence belongs to the peptidase M17 family. Requires Mn(2+) as cofactor.

It is found in the cytoplasm. It catalyses the reaction Release of an N-terminal amino acid, Xaa-|-Yaa-, in which Xaa is preferably Leu, but may be other amino acids including Pro although not Arg or Lys, and Yaa may be Pro. Amino acid amides and methyl esters are also readily hydrolyzed, but rates on arylamides are exceedingly low.. The enzyme catalyses Release of an N-terminal amino acid, preferentially leucine, but not glutamic or aspartic acids.. Its function is as follows. Presumably involved in the processing and regular turnover of intracellular proteins. Catalyzes the removal of unsubstituted N-terminal amino acids from various peptides. In Aeropyrum pernix (strain ATCC 700893 / DSM 11879 / JCM 9820 / NBRC 100138 / K1), this protein is Probable cytosol aminopeptidase (pepA).